We begin with the raw amino-acid sequence, 539 residues long: Membrane protein insertase YidC (539 aa).

5 helical membrane-spanning segments follow: residues 6–26 (TLLVLLLALVSFLLFQQWQVA), 341–361 (SVIQSFVGNWGVAIICLTFIV), 416–436 (LGGCLPLILQMPIFIALYWAL), 454–474 (LSAQDPYFILPLLMGGSMFLI), and 495–515 (PVMFTFFFLWFPSGLVLYWLV).

This sequence belongs to the OXA1/ALB3/YidC family. Type 1 subfamily. As to quaternary structure, interacts with the Sec translocase complex via SecD. Specifically interacts with transmembrane segments of nascent integral membrane proteins during membrane integration.

The protein localises to the cell inner membrane. Required for the insertion and/or proper folding and/or complex formation of integral membrane proteins into the membrane. Involved in integration of membrane proteins that insert both dependently and independently of the Sec translocase complex, as well as at least some lipoproteins. Aids folding of multispanning membrane proteins. The sequence is that of Membrane protein insertase YidC from Vibrio vulnificus (strain YJ016).